Reading from the N-terminus, the 565-residue chain is Mitochondrial distribution and morphology protein 34 (565 aa).

The region spanning 1–208 is the SMP-LTD domain; that stretch reads MAFNFNWSPL…VPEYRDRESE (208 aa). Over residues 209–220 the composition is skewed to polar residues; the sequence is SVNTLDLSSESG. Disordered stretches follow at residues 209 to 241, 347 to 463, and 533 to 565; these read SVNT…GNAL, FGSY…SRSA, and MQEQ…AYGH. A compositionally biased stretch (basic residues) spans 353–367; that stretch reads PGRHSRSHTKKRKKR. Positions 368-378 are enriched in basic and acidic residues; the sequence is VVDLRRPKTTD. Residues 382–391 show a composition bias toward low complexity; sequence SVSGDSVFSS. 2 stretches are compositionally biased toward polar residues: residues 392–402 and 439–463; these read ENATSAPTIFS and QGDQ…SRSA.

It belongs to the MDM34 family. As to quaternary structure, component of the ER-mitochondria encounter structure (ERMES) or MDM complex, composed of mmm1, mdm10, mdm12 and mdm34.

The protein resides in the mitochondrion outer membrane. In terms of biological role, component of the ERMES/MDM complex, which serves as a molecular tether to connect the endoplasmic reticulum (ER) and mitochondria. Components of this complex are involved in the control of mitochondrial shape and protein biogenesis, and function in nonvesicular lipid trafficking between the ER and mitochondria. Mdm34 is required for the interaction of the ER-resident membrane protein mmm1 and the outer mitochondrial membrane-resident beta-barrel protein mdm10. The polypeptide is Mitochondrial distribution and morphology protein 34 (Talaromyces marneffei (strain ATCC 18224 / CBS 334.59 / QM 7333) (Penicillium marneffei)).